A 773-amino-acid polypeptide reads, in one-letter code: Cellobiose dehydrogenase (773 aa).

The first 18 residues, 1–18 (MLGRSLLALLPFVGLAFS), serve as a signal peptide directing secretion. The residue at position 19 (Q19) is a Pyrrolidone carboxylic acid. Residues 19-208 (QSASQFTDPT…YQNYLNGDSG (190 aa)) are heme domain. M83 and H181 together coordinate heme. The interval 203–227 (LNGDSGNPTTTSTKPTSTSSSVTTG) is disordered. Residues 210–227 (PTTTSTKPTSTSSSVTTG) are compositionally biased toward low complexity. The tract at residues 235–773 (YDYIIVGAGP…AKILALAGGP (539 aa)) is oxidoreductase. FAD is bound at residue 236–265 (DYIIVGAGPGGIIAADRLSEAGKKVLLLER). Residue H707 is the Proton acceptor of the active site.

In the C-terminal section; belongs to the GMC oxidoreductase family. It depends on FAD as a cofactor. Heme serves as cofactor.

It localises to the secreted. It catalyses the reaction D-cellobiose + A = D-cellobiono-1,5-lactone + AH2. Degrades both lignin and cellulose. Oxidizes cellobiose to cellobionolactone. This chain is Cellobiose dehydrogenase (CDH-1), found in Phanerodontia chrysosporium (White-rot fungus).